The sequence spans 336 residues: tRNA N6-adenosine threonylcarbamoyltransferase (336 aa).

The Fe cation site is built by H111 and H115. Substrate-binding positions include 134–138 (VVSGG), D167, G180, D184, and N272. D300 is a Fe cation binding site.

It belongs to the KAE1 / TsaD family. The cofactor is Fe(2+).

Its subcellular location is the cytoplasm. The enzyme catalyses L-threonylcarbamoyladenylate + adenosine(37) in tRNA = N(6)-L-threonylcarbamoyladenosine(37) in tRNA + AMP + H(+). Its function is as follows. Required for the formation of a threonylcarbamoyl group on adenosine at position 37 (t(6)A37) in tRNAs that read codons beginning with adenine. Is involved in the transfer of the threonylcarbamoyl moiety of threonylcarbamoyl-AMP (TC-AMP) to the N6 group of A37, together with TsaE and TsaB. TsaD likely plays a direct catalytic role in this reaction. The chain is tRNA N6-adenosine threonylcarbamoyltransferase from Caldicellulosiruptor saccharolyticus (strain ATCC 43494 / DSM 8903 / Tp8T 6331).